The sequence spans 132 residues: MSMTDPIADFLTRIRNANMVRHESLEVPASKIKKDMAEILKNEGFIKDVEYIEDDKQGIIRVFLKYGKNNERVISGLKRISKPGLRSYVKSDEVPKVLNGLGIAIISTSEGVITDKEARAKKIGGEVLAYIW.

Belongs to the universal ribosomal protein uS8 family. In terms of assembly, part of the 30S ribosomal subunit. Contacts proteins S5 and S12.

Functionally, one of the primary rRNA binding proteins, it binds directly to 16S rRNA central domain where it helps coordinate assembly of the platform of the 30S subunit. The sequence is that of Small ribosomal subunit protein uS8 from Pediococcus pentosaceus (strain ATCC 25745 / CCUG 21536 / LMG 10740 / 183-1w).